A 499-amino-acid chain; its full sequence is Glycerol kinase (499 aa).

T13 lines the ADP pocket. T13, T14, and S15 together coordinate ATP. A sn-glycerol 3-phosphate-binding site is contributed by T13. Residue R17 participates in ADP binding. Sn-glycerol 3-phosphate contacts are provided by R83, E84, Y135, and D245. 5 residues coordinate glycerol: R83, E84, Y135, D245, and Q246. ADP-binding residues include T267 and G310. Positions 267, 310, 314, and 411 each coordinate ATP. Residues G411 and N415 each contribute to the ADP site.

This sequence belongs to the FGGY kinase family.

The catalysed reaction is glycerol + ATP = sn-glycerol 3-phosphate + ADP + H(+). The protein operates within polyol metabolism; glycerol degradation via glycerol kinase pathway; sn-glycerol 3-phosphate from glycerol: step 1/1. Inhibited by fructose 1,6-bisphosphate (FBP). Functionally, key enzyme in the regulation of glycerol uptake and metabolism. Catalyzes the phosphorylation of glycerol to yield sn-glycerol 3-phosphate. This chain is Glycerol kinase, found in Xanthomonas campestris pv. campestris (strain 8004).